A 689-amino-acid polypeptide reads, in one-letter code: Protein CFAP20DC (689 aa).

5 disordered regions span residues 143–179 (GPPP…TVEK), 217–236 (LPIM…NNNR), 241–262 (LKST…NNTN), 333–424 (SKES…PSEL), and 583–660 (SIST…LSVE). Positions 150-176 (RRSNMRISSETVRSVGSKNNRSCQPST) are enriched in polar residues. The span at 343–359 (EESQSVPKDIFTFSSRP) shows a compositional bias: polar residues. Residues 394 to 405 (SEDDFYGGDSSE) show a composition bias toward acidic residues. Over residues 411 to 421 (IQGSRGPTTGP) the composition is skewed to polar residues. The segment covering 583–593 (SISTSSDDTTT) has biased composition (low complexity).

The chain is Protein CFAP20DC (CFAP20DC) from Macaca fascicularis (Crab-eating macaque).